The chain runs to 158 residues: Large ribosomal subunit protein uL16 (158 aa).

This sequence belongs to the universal ribosomal protein uL16 family. In terms of assembly, part of the 50S ribosomal subunit.

In terms of biological role, binds 23S rRNA and is also seen to make contacts with the A and possibly P site tRNAs. The chain is Large ribosomal subunit protein uL16 from Prochlorococcus marinus (strain MIT 9303).